We begin with the raw amino-acid sequence, 734 residues long: Photosystem I P700 chlorophyll a apoprotein A2 (734 aa).

Transmembrane regions (helical) follow at residues 46–69 (IFASHFGQLAIIFLWTSGNLFHVA), 135–158 (LYTGALFLLLLSAISLIASWLHLQ), 175–199 (LNHHLSGLFGVSSLAWTGHLVHVAI), 273–291 (IAHHHLAIAFLFLVAGHMY), 330–353 (LHFQLGLALASLGVITSLVAQHMY), 369–395 (AALYTHHQYIAGFIMTGAFAHGAIFFI), 417–439 (AITSHLSWASLFLGFHTLGLYVH), and 517–535 (FLVHHAIALGLHTTTLILV). Residues Cys-559 and Cys-568 each coordinate [4Fe-4S] cluster. Transmembrane regions (helical) follow at residues 575–596 (AFYLAVFWMLNTIGWVTFYWHW) and 643–665 (LSVWAWMFLFGHLVWATGFMFLI). Chlorophyll a-binding residues include His-654, Met-662, and Tyr-670. Trp-671 is a phylloquinone binding site. The chain crosses the membrane as a helical span at residues 707-727 (LVGLVHFSVGYIFTYAAFLIA).

It belongs to the PsaA/PsaB family. The PsaA/B heterodimer binds the P700 chlorophyll special pair and subsequent electron acceptors. PSI consists of a core antenna complex that captures photons, and an electron transfer chain that converts photonic excitation into a charge separation. The eukaryotic PSI reaction center is composed of at least 11 subunits. P700 is a chlorophyll a/chlorophyll a' dimer, A0 is one or more chlorophyll a, A1 is one or both phylloquinones and FX is a shared 4Fe-4S iron-sulfur center. is required as a cofactor.

The protein localises to the plastid. It is found in the chloroplast thylakoid membrane. The catalysed reaction is reduced [plastocyanin] + hnu + oxidized [2Fe-2S]-[ferredoxin] = oxidized [plastocyanin] + reduced [2Fe-2S]-[ferredoxin]. PsaA and PsaB bind P700, the primary electron donor of photosystem I (PSI), as well as the electron acceptors A0, A1 and FX. PSI is a plastocyanin-ferredoxin oxidoreductase, converting photonic excitation into a charge separation, which transfers an electron from the donor P700 chlorophyll pair to the spectroscopically characterized acceptors A0, A1, FX, FA and FB in turn. Oxidized P700 is reduced on the lumenal side of the thylakoid membrane by plastocyanin. This chain is Photosystem I P700 chlorophyll a apoprotein A2, found in Phalaenopsis aphrodite subsp. formosana (Moth orchid).